Consider the following 181-residue polypeptide: Large ribosomal subunit protein uL5 (181 aa).

The protein belongs to the universal ribosomal protein uL5 family. As to quaternary structure, part of the 50S ribosomal subunit; part of the 5S rRNA/L5/L18/L25 subcomplex. Contacts the 5S rRNA and the P site tRNA. Forms a bridge to the 30S subunit in the 70S ribosome.

Functionally, this is one of the proteins that bind and probably mediate the attachment of the 5S RNA into the large ribosomal subunit, where it forms part of the central protuberance. In the 70S ribosome it contacts protein S13 of the 30S subunit (bridge B1b), connecting the 2 subunits; this bridge is implicated in subunit movement. Contacts the P site tRNA; the 5S rRNA and some of its associated proteins might help stabilize positioning of ribosome-bound tRNAs. This is Large ribosomal subunit protein uL5 from Clostridium kluyveri (strain NBRC 12016).